The primary structure comprises 805 residues: Phenylalanine--tRNA ligase beta subunit (805 aa).

The tRNA-binding domain occupies 39–148 (APPFTGVVVT…AALRPGTDIR (110 aa)). The B5 domain maps to 399-474 (PVREPVRMRL…RVYGFERIPD (76 aa)). Mg(2+) contacts are provided by D452, D458, E461, and E462. In terms of domain architecture, FDX-ACB spans 703-804 (SRQPVVVRDL…LVAAHNARQR (102 aa)).

Belongs to the phenylalanyl-tRNA synthetase beta subunit family. Type 1 subfamily. In terms of assembly, tetramer of two alpha and two beta subunits. The cofactor is Mg(2+).

It is found in the cytoplasm. The enzyme catalyses tRNA(Phe) + L-phenylalanine + ATP = L-phenylalanyl-tRNA(Phe) + AMP + diphosphate + H(+). In Bordetella pertussis (strain Tohama I / ATCC BAA-589 / NCTC 13251), this protein is Phenylalanine--tRNA ligase beta subunit.